Consider the following 118-residue polypeptide: Large ribosomal subunit protein uL24 (118 aa).

This sequence belongs to the universal ribosomal protein uL24 family. In terms of assembly, part of the 50S ribosomal subunit.

In terms of biological role, one of two assembly initiator proteins, it binds directly to the 5'-end of the 23S rRNA, where it nucleates assembly of the 50S subunit. One of the proteins that surrounds the polypeptide exit tunnel on the outside of the subunit. The polypeptide is Large ribosomal subunit protein uL24 (Synechococcus sp. (strain CC9605)).